Reading from the N-terminus, the 190-residue chain is UPF0301 protein Rpic_0619 (190 aa).

The protein belongs to the UPF0301 (AlgH) family.

This Ralstonia pickettii (strain 12J) protein is UPF0301 protein Rpic_0619.